The chain runs to 441 residues: MPLPNQIATSNVETKNFASLKRSDEPIAIAQASRTPAKIYFDFQATTPVDPRVLDAMLPYFTKKYGNPHSRTHSFGWESEKAVETARKQVADLIGAHEKEIIFTSGATESNNLAIKGAVDWKAQDGNPVHVITTQVEHKCVLDSMRFLEEKGARVTYMKVNKDGVIDLEELKRSISDDTVLVSIMGVNNEIGTVQPLEEIGKICKERNVLFHCDAAQMFGKLKIDVNKMNIDLLSISGHKIYGPKGVGALYVRRRPRVRLVPLFSGGGQERGLRSGTLPTPLIVGLGKAAAVCQEEMQRDLSWIESLSKKLYTCLKENIPNVIKNGSLQTNPLRWFPGCLNLSFPHVEGEGLLMALKNIALSSGSACTSASLEPSYVLRALGNDDELAHSSIRFGIGRFTTPCEIKEVAKQTTSAVKKLRDMSPLYEMEQEGIDLKTIKWT.

Residues 107 to 108 (AT), Asn189, Gln217, and 237 to 239 (SGH) each bind pyridoxal 5'-phosphate. The residue at position 240 (Lys240) is an N6-(pyridoxal phosphate)lysine. Thr277 lines the pyridoxal 5'-phosphate pocket. The active-site Cysteine persulfide intermediate is the Cys367. [2Fe-2S] cluster is bound at residue Cys367.

The protein belongs to the class-V pyridoxal-phosphate-dependent aminotransferase family. NifS/IscS subfamily. In terms of assembly, interacts with ISD11. The cofactor is pyridoxal 5'-phosphate.

It is found in the mitosome. It catalyses the reaction (sulfur carrier)-H + L-cysteine = (sulfur carrier)-SH + L-alanine. In terms of biological role, catalyzes the removal of elemental sulfur from cysteine to produce alanine. It supplies the inorganic sulfur for iron-sulfur (Fe-S) clusters in mitosomes. This chain is Cysteine desulfurase, mitosomal, found in Trachipleistophora hominis (Microsporidian parasite).